A 398-amino-acid chain; its full sequence is Bifunctional enzyme IspD/IspF (398 aa).

The tract at residues 1–234 (MAKSQRTAVV…ARLAAQLGDI (234 aa)) is 2-C-methyl-D-erythritol 4-phosphate cytidylyltransferase. The segment at 235–398 (RTGTGYDVHA…LPFNEKTWSV (164 aa)) is 2-C-methyl-D-erythritol 2,4-cyclodiphosphate synthase. The a divalent metal cation site is built by Asp-241 and His-243. Residues 241–243 (DVH) and 267–268 (HS) contribute to the 4-CDP-2-C-methyl-D-erythritol 2-phosphate site. His-275 is a binding site for a divalent metal cation. Residues 289 to 291 (DIG), 365 to 368 (TTSE), Phe-372, and Arg-375 contribute to the 4-CDP-2-C-methyl-D-erythritol 2-phosphate site.

In the N-terminal section; belongs to the IspD/TarI cytidylyltransferase family. IspD subfamily. This sequence in the C-terminal section; belongs to the IspF family. The cofactor is a divalent metal cation.

The catalysed reaction is 2-C-methyl-D-erythritol 4-phosphate + CTP + H(+) = 4-CDP-2-C-methyl-D-erythritol + diphosphate. The enzyme catalyses 4-CDP-2-C-methyl-D-erythritol 2-phosphate = 2-C-methyl-D-erythritol 2,4-cyclic diphosphate + CMP. The protein operates within isoprenoid biosynthesis; isopentenyl diphosphate biosynthesis via DXP pathway; isopentenyl diphosphate from 1-deoxy-D-xylulose 5-phosphate: step 2/6. Its pathway is isoprenoid biosynthesis; isopentenyl diphosphate biosynthesis via DXP pathway; isopentenyl diphosphate from 1-deoxy-D-xylulose 5-phosphate: step 4/6. Bifunctional enzyme that catalyzes the formation of 4-diphosphocytidyl-2-C-methyl-D-erythritol from CTP and 2-C-methyl-D-erythritol 4-phosphate (MEP) (IspD), and catalyzes the conversion of 4-diphosphocytidyl-2-C-methyl-D-erythritol 2-phosphate (CDP-ME2P) to 2-C-methyl-D-erythritol 2,4-cyclodiphosphate (ME-CPP) with a corresponding release of cytidine 5-monophosphate (CMP) (IspF). In Bradyrhizobium diazoefficiens (strain JCM 10833 / BCRC 13528 / IAM 13628 / NBRC 14792 / USDA 110), this protein is Bifunctional enzyme IspD/IspF.